We begin with the raw amino-acid sequence, 354 residues long: UDP-3-O-acylglucosamine N-acyltransferase (354 aa).

H247 (proton acceptor) is an active-site residue.

This sequence belongs to the transferase hexapeptide repeat family. LpxD subfamily. As to quaternary structure, homotrimer.

It carries out the reaction a UDP-3-O-[(3R)-3-hydroxyacyl]-alpha-D-glucosamine + a (3R)-hydroxyacyl-[ACP] = a UDP-2-N,3-O-bis[(3R)-3-hydroxyacyl]-alpha-D-glucosamine + holo-[ACP] + H(+). Its pathway is bacterial outer membrane biogenesis; LPS lipid A biosynthesis. Its function is as follows. Catalyzes the N-acylation of UDP-3-O-acylglucosamine using 3-hydroxyacyl-ACP as the acyl donor. Is involved in the biosynthesis of lipid A, a phosphorylated glycolipid that anchors the lipopolysaccharide to the outer membrane of the cell. The sequence is that of UDP-3-O-acylglucosamine N-acyltransferase from Chlamydia trachomatis serovar A (strain ATCC VR-571B / DSM 19440 / HAR-13).